The chain runs to 152 residues: Ribosome maturation factor RimP (152 aa).

This sequence belongs to the RimP family.

The protein localises to the cytoplasm. In terms of biological role, required for maturation of 30S ribosomal subunits. In Idiomarina loihiensis (strain ATCC BAA-735 / DSM 15497 / L2-TR), this protein is Ribosome maturation factor RimP.